The following is a 308-amino-acid chain: Pantothenate synthetase (308 aa).

Position 39 to 46 (39 to 46 (MGALHDGH)) interacts with ATP. The Proton donor role is filled by H46. A (R)-pantoate-binding site is contributed by Q71. Q71 contributes to the beta-alanine binding site. 157 to 160 (GEKD) is an ATP binding site. Q163 is a (R)-pantoate binding site. ATP contacts are provided by residues V186 and 194–197 (MSSR). Residues 286–308 (IETPAGTAGPDGDRQYAQSPWRN) are disordered.

Belongs to the pantothenate synthetase family. Homodimer.

Its subcellular location is the cytoplasm. The catalysed reaction is (R)-pantoate + beta-alanine + ATP = (R)-pantothenate + AMP + diphosphate + H(+). It participates in cofactor biosynthesis; (R)-pantothenate biosynthesis; (R)-pantothenate from (R)-pantoate and beta-alanine: step 1/1. In terms of biological role, catalyzes the condensation of pantoate with beta-alanine in an ATP-dependent reaction via a pantoyl-adenylate intermediate. The polypeptide is Pantothenate synthetase (Mycolicibacterium paratuberculosis (strain ATCC BAA-968 / K-10) (Mycobacterium paratuberculosis)).